Reading from the N-terminus, the 350-residue chain is Ubiquitin carboxyl-terminal hydrolase 11 (350 aa).

In terms of domain architecture, USP spans Lys-49–Glu-344. The Nucleophile role is filled by Cys-59. The active-site Proton acceptor is the His-302.

This sequence belongs to the peptidase C19 family.

The enzyme catalyses Thiol-dependent hydrolysis of ester, thioester, amide, peptide and isopeptide bonds formed by the C-terminal Gly of ubiquitin (a 76-residue protein attached to proteins as an intracellular targeting signal).. The polypeptide is Ubiquitin carboxyl-terminal hydrolase 11 (ubp11) (Schizosaccharomyces pombe (strain 972 / ATCC 24843) (Fission yeast)).